Here is a 473-residue protein sequence, read N- to C-terminus: Trehalose-6-phosphate synthase (473 aa).

Arginine 10 provides a ligand contact to D-glucose 6-phosphate. A UDP-alpha-D-glucose-binding site is contributed by 21–22; it reads GG. D-glucose 6-phosphate is bound by residues tyrosine 76 and aspartate 130. UDP-alpha-D-glucose is bound by residues arginine 262 and lysine 267. D-glucose 6-phosphate is bound at residue arginine 300. UDP-alpha-D-glucose is bound by residues phenylalanine 339 and 365–369; that span reads LVAKE. The tract at residues 454–473 is disordered; it reads TPRSPERQQQNNVATFPKLA.

The protein belongs to the glycosyltransferase 20 family. Homotetramer.

The enzyme catalyses D-glucose 6-phosphate + UDP-alpha-D-glucose = alpha,alpha-trehalose 6-phosphate + UDP + H(+). It functions in the pathway glycan biosynthesis; trehalose biosynthesis. Functionally, probably involved in the osmoprotection via the biosynthesis of trehalose. Catalyzes the transfer of glucose from UDP-alpha-D-glucose (UDP-Glc) to D-glucose 6-phosphate (Glc-6-P) to form trehalose-6-phosphate. Acts with retention of the anomeric configuration of the UDP-sugar donor. The chain is Trehalose-6-phosphate synthase from Salmonella choleraesuis (strain SC-B67).